Here is a 101-residue protein sequence, read N- to C-terminus: Small ribosomal subunit protein uS14A (101 aa).

The interval 31-67 (LRRPSSTEAERLAAQRELRRQPRDASPTRVRNRDQID) is disordered. The span at 38-53 (EAERLAAQRELRRQPR) shows a compositional bias: basic and acidic residues.

This sequence belongs to the universal ribosomal protein uS14 family. In terms of assembly, part of the 30S ribosomal subunit. Contacts proteins S3 and S10.

Its function is as follows. Binds 16S rRNA, required for the assembly of 30S particles and may also be responsible for determining the conformation of the 16S rRNA at the A site. The protein is Small ribosomal subunit protein uS14A of Streptomyces coelicolor (strain ATCC BAA-471 / A3(2) / M145).